The primary structure comprises 359 residues: Popy class I histocompatibility antigen, alpha chain E (359 aa).

The first 18 residues, 1-18, serve as a signal peptide directing secretion; that stretch reads GTLLLLLSEALALTETWA. The tract at residues 19–108 is alpha-1; the sequence is GSHSLKYFHT…LRGYYNQTEA (90 aa). Over 19 to 302 the chain is Extracellular; sequence GSHSLKYFHT…EPASQTTIPI (284 aa). Asparagine 104 is a glycosylation site (N-linked (GlcNAc...) asparagine). The segment at 109-200 is alpha-2; sequence GSHTLQWMHG…EKGKETLLHL (92 aa). 2 cysteine pairs are disulfide-bonded: cysteine 119–cysteine 182 and cysteine 221–cysteine 277. The segment at 201-292 is alpha-3; that stretch reads DPPKTHVTHH…GLPEPLTLRW (92 aa). The Ig-like C1-type domain occupies 203-291; that stretch reads PKTHVTHHRI…EGLPEPLTLR (89 aa). The interval 293 to 302 is connecting peptide; sequence EPASQTTIPI. The chain crosses the membrane as a helical span at residues 303 to 326; it reads VGIFAGLVLLGAVVTGATVVAAVM. At 327–359 the chain is on the cytoplasmic side; it reads WRKKSSGGKGGSYSKAEWSDSAQGSESLTACKA. Residues 330–359 form a disordered region; sequence KSSGGKGGSYSKAEWSDSAQGSESLTACKA. Residues 346–359 show a composition bias toward polar residues; sequence DSAQGSESLTACKA. Serine 351 is subject to Phosphoserine.

The protein belongs to the MHC class I family. Heterodimer of an alpha chain and a beta chain (beta-2-microglobulin).

The protein resides in the membrane. Involved in the presentation of foreign antigens to the immune system. This is Popy class I histocompatibility antigen, alpha chain E (Popy-E) from Pongo pygmaeus (Bornean orangutan).